The sequence spans 156 residues: Ribosomal RNA large subunit methyltransferase H (156 aa).

Residues L72, G104, and 123 to 128 (FGKMVW) each bind S-adenosyl-L-methionine.

This sequence belongs to the RNA methyltransferase RlmH family. Homodimer.

Its subcellular location is the cytoplasm. It catalyses the reaction pseudouridine(1915) in 23S rRNA + S-adenosyl-L-methionine = N(3)-methylpseudouridine(1915) in 23S rRNA + S-adenosyl-L-homocysteine + H(+). In terms of biological role, specifically methylates the pseudouridine at position 1915 (m3Psi1915) in 23S rRNA. In Ruegeria sp. (strain TM1040) (Silicibacter sp.), this protein is Ribosomal RNA large subunit methyltransferase H.